Consider the following 319-residue polypeptide: Large ribosomal subunit protein uL10 (319 aa).

A disordered region spans residues 289 to 319 (EQKSAAPAAKEEAPKEDSEESDEDMGFGLFD).

Belongs to the universal ribosomal protein uL10 family. As to quaternary structure, P0 forms a pentameric complex by interaction with dimers of P1 and P2. Post-translationally, phosphorylated.

Its subcellular location is the nucleus. The protein localises to the cytoplasm. Ribosomal protein P0 is the functional equivalent of E.coli protein L10. The chain is Large ribosomal subunit protein uL10 (rplp0) from Danio rerio (Zebrafish).